The primary structure comprises 363 residues: GTPase Obg (363 aa).

The region spanning 1–159 (MKFLDEAKVY…KTIWLRLKLI (159 aa)) is the Obg domain. An OBG-type G domain is found at 160-327 (ADAGLVGLPN…VLRALRDIIV (168 aa)). GTP is bound by residues 166-173 (GLPNAGKS), 191-195 (FTTLH), 212-215 (DIPG), 279-282 (SQID), and 308-310 (SAV). Mg(2+) contacts are provided by S173 and T193. Residues 332-363 (EEKPAKAPKLRHRDMIVSEENNQGEDGADDQP) are disordered. Residues 353 to 363 (NQGEDGADDQP) are compositionally biased toward acidic residues.

Belongs to the TRAFAC class OBG-HflX-like GTPase superfamily. OBG GTPase family. As to quaternary structure, monomer. Mg(2+) serves as cofactor.

The protein localises to the cytoplasm. Functionally, an essential GTPase which binds GTP, GDP and possibly (p)ppGpp with moderate affinity, with high nucleotide exchange rates and a fairly low GTP hydrolysis rate. Plays a role in control of the cell cycle, stress response, ribosome biogenesis and in those bacteria that undergo differentiation, in morphogenesis control. In Rhizobium etli (strain ATCC 51251 / DSM 11541 / JCM 21823 / NBRC 15573 / CFN 42), this protein is GTPase Obg.